The sequence spans 329 residues: Serine dehydratase-like (329 aa).

Position 1 is an N-acetylmethionine (Met-1). Lys-48 carries the post-translational modification N6-(pyridoxal phosphate)lysine.

Belongs to the serine/threonine dehydratase family. Monomer. Homodimer. The cofactor is pyridoxal 5'-phosphate.

The enzyme catalyses L-serine = pyruvate + NH4(+). It carries out the reaction L-threonine = 2-oxobutanoate + NH4(+). It catalyses the reaction L-glutamate = D-glutamate. With respect to regulation, serine dehydratase activity is inhibited by manganese chloride, ferrous chloride, cobalt chloride, cupric chloride, nickel chloride and zinc chloride. Glutamate racemase activity is inhibited by manganese chloride, ferrous chloride, cupric chloride and zinc chloride. Catalyzes the pyridoxal-phosphate-dependent dehydrative deamination of L-threonine and L-serine to ammonia and alpha-ketobutyrate and pyruvate, respectively. Also exhibits racemase activity towards L-glutamate and D-glutamate. The chain is Serine dehydratase-like (Sdsl) from Rattus norvegicus (Rat).